The primary structure comprises 353 residues: Mitochondrial import inner membrane translocase subunit TIM50 (353 aa).

The N-terminal 21 residues, 1–21, are a transit peptide targeting the mitochondrion; sequence MAASAALFSRLRSGLRVGARG. The Mitochondrial matrix segment spans residues 22–65; sequence LCTRLAPPPPRTPEQVTEIANRGGSKAQGPQHQPGSEGPSYAKK. Residues 24-59 form a disordered region; the sequence is TRLAPPPPRTPEQVTEIANRGGSKAQGPQHQPGSEG. Residues 66-86 form a helical membrane-spanning segment; sequence IALWIAGLLGAGGTVSIVYIF. At 87–353 the chain is on the mitochondrial intermembrane side; the sequence is GNNPVDENGT…SRLWPRSKQP (267 aa). One can recognise an FCP1 homology domain in the interval 143-286; sequence YYQPPYTLVL…LDLSAFLKTI (144 aa). Serine 341 bears the Phosphoserine mark.

It belongs to the TIM50 family. In terms of assembly, component of the TIM23 complex at least composed of TIMM23, TIMM17 (TIMM17A or TIMM17B) and TIMM50; within this complex, directly interacts with TIMM23. The complex interacts with the TIMM44 component of the PAM complex and with DNAJC15.

The protein localises to the mitochondrion inner membrane. Its function is as follows. Essential component of the TIM23 complex, a complex that mediates the translocation of transit peptide-containing proteins across the mitochondrial inner membrane. Has some phosphatase activity in vitro; however such activity may not be relevant in vivo. The sequence is that of Mitochondrial import inner membrane translocase subunit TIM50 (Timm50) from Mus musculus (Mouse).